A 644-amino-acid chain; its full sequence is Exoribonuclease 2 (644 aa).

Residues 189-516 (REDLTALNFV…NHRLLKAMIT (328 aa)) form the RNB domain. Residues 561–643 (DTRFTAEIID…ETRNVIARPV (83 aa)) enclose the S1 motif domain.

Belongs to the RNR ribonuclease family. RNase II subfamily.

It localises to the cytoplasm. It carries out the reaction Exonucleolytic cleavage in the 3'- to 5'-direction to yield nucleoside 5'-phosphates.. Involved in mRNA degradation. Hydrolyzes single-stranded polyribonucleotides processively in the 3' to 5' direction. The polypeptide is Exoribonuclease 2 (Yersinia pestis bv. Antiqua (strain Antiqua)).